A 734-amino-acid chain; its full sequence is Photosystem I P700 chlorophyll a apoprotein A2 (734 aa).

The next 8 helical transmembrane spans lie at Ile46–Ala69, Leu135–Gln158, Leu175–Ile199, Ile273–Tyr291, Leu330–Tyr353, Ala369–Ile395, Ala417–His439, and Phe517–Val535. 2 residues coordinate [4Fe-4S] cluster: Cys559 and Cys568. 2 helical membrane passes run Ala575 to Trp596 and Leu643 to Ile665. Residues His654, Met662, and Tyr670 each coordinate chlorophyll a. A phylloquinone-binding site is contributed by Trp671. Residues Leu707–Ala727 traverse the membrane as a helical segment.

The protein belongs to the PsaA/PsaB family. In terms of assembly, the PsaA/B heterodimer binds the P700 chlorophyll special pair and subsequent electron acceptors. PSI consists of a core antenna complex that captures photons, and an electron transfer chain that converts photonic excitation into a charge separation. The eukaryotic PSI reaction center is composed of at least 11 subunits. Requires P700 is a chlorophyll a/chlorophyll a' dimer, A0 is one or more chlorophyll a, A1 is one or both phylloquinones and FX is a shared 4Fe-4S iron-sulfur center. as cofactor.

Its subcellular location is the plastid. The protein localises to the chloroplast thylakoid membrane. It carries out the reaction reduced [plastocyanin] + hnu + oxidized [2Fe-2S]-[ferredoxin] = oxidized [plastocyanin] + reduced [2Fe-2S]-[ferredoxin]. In terms of biological role, psaA and PsaB bind P700, the primary electron donor of photosystem I (PSI), as well as the electron acceptors A0, A1 and FX. PSI is a plastocyanin-ferredoxin oxidoreductase, converting photonic excitation into a charge separation, which transfers an electron from the donor P700 chlorophyll pair to the spectroscopically characterized acceptors A0, A1, FX, FA and FB in turn. Oxidized P700 is reduced on the lumenal side of the thylakoid membrane by plastocyanin. In Nicotiana tabacum (Common tobacco), this protein is Photosystem I P700 chlorophyll a apoprotein A2.